Consider the following 286-residue polypeptide: Beta-lactamase SHV-24 (286 aa).

The first 21 residues, 1–21 (MRYIRLCIISLLATLPLAVHA), serve as a signal peptide directing secretion. The active-site Acyl-ester intermediate is serine 66. A disulfide bond links cysteine 73 and cysteine 119. The active-site Proton acceptor is the glutamate 164. 230–232 (KTG) is a substrate binding site.

Belongs to the class-A beta-lactamase family.

The enzyme catalyses a beta-lactam + H2O = a substituted beta-amino acid. In terms of biological role, hydrolyzes ampicillin. Can also hydrolyze cephaloridine, aztreonam and ceftazidime with a low catalytic rate. The protein is Beta-lactamase SHV-24 (bla) of Escherichia coli.